The following is a 473-amino-acid chain: Photosystem II CP43 reaction center protein (473 aa).

A propeptide spanning residues methionine 1–glutamate 14 is cleaved from the precursor. At threonine 15 the chain carries N-acetylthreonine. Threonine 15 carries the phosphothreonine modification. 5 helical membrane passes run leucine 69–alanine 93, leucine 134–asparagine 155, lysine 178–threonine 200, lysine 255–serine 275, and tryptophan 291–alanine 312. Position 367 (glutamate 367) interacts with [CaMn4O5] cluster. A helical membrane pass occupies residues arginine 447–proline 471.

Belongs to the PsbB/PsbC family. PsbC subfamily. As to quaternary structure, PSII is composed of 1 copy each of membrane proteins PsbA, PsbB, PsbC, PsbD, PsbE, PsbF, PsbH, PsbI, PsbJ, PsbK, PsbL, PsbM, PsbT, PsbX, PsbY, PsbZ, Psb30/Ycf12, at least 3 peripheral proteins of the oxygen-evolving complex and a large number of cofactors. It forms dimeric complexes. Requires Binds multiple chlorophylls and provides some of the ligands for the Ca-4Mn-5O cluster of the oxygen-evolving complex. It may also provide a ligand for a Cl- that is required for oxygen evolution. PSII binds additional chlorophylls, carotenoids and specific lipids. as cofactor.

The protein localises to the plastid. It localises to the chloroplast thylakoid membrane. Functionally, one of the components of the core complex of photosystem II (PSII). It binds chlorophyll and helps catalyze the primary light-induced photochemical processes of PSII. PSII is a light-driven water:plastoquinone oxidoreductase, using light energy to abstract electrons from H(2)O, generating O(2) and a proton gradient subsequently used for ATP formation. This Lolium perenne (Perennial ryegrass) protein is Photosystem II CP43 reaction center protein.